The sequence spans 319 residues: Ferrochelatase (319 aa).

Fe cation is bound by residues histidine 193 and glutamate 274.

This sequence belongs to the ferrochelatase family.

Its subcellular location is the cytoplasm. It carries out the reaction heme b + 2 H(+) = protoporphyrin IX + Fe(2+). The protein operates within porphyrin-containing compound metabolism; protoheme biosynthesis; protoheme from protoporphyrin-IX: step 1/1. Catalyzes the ferrous insertion into protoporphyrin IX. The sequence is that of Ferrochelatase from Actinobacillus pleuropneumoniae serotype 3 (strain JL03).